A 587-amino-acid polypeptide reads, in one-letter code: Cyclic GMP-AMP synthase-like receptor (587 aa).

Disordered stretches follow at residues 26 to 48 (IHPS…RRDD) and 77 to 229 (TRMH…DRPL). Composition is skewed to basic and acidic residues over residues 95 to 138 (TRDR…RDSL), 150 to 185 (DGAR…RESL), and 204 to 228 (PESR…HDRP). Mg(2+) is bound by residues glutamate 307, aspartate 309, and aspartate 409.

Belongs to the mab-21 family. It depends on Mg(2+) as a cofactor. Mn(2+) serves as cofactor.

The catalysed reaction is UTP + ATP = 2',3'-cUAMP + 2 diphosphate. In terms of biological role, nucleotidyltransferase that catalyzes the formation of cyclic UMP-AMP (2',3'-cUAMP) from ATP and UTP and plays a key role in innate immunity. Acts as a key sensor of double-stranded DNA (dsDNA), the presence of dsDNA in the cytoplasm being a danger signal that triggers the immune responses. Directly binds dsDNA, activating the nucleotidyltransferase activity, leading to synthesis of 2',3'-cUAMP, a second messenger that binds to and activates Sting, thereby triggering the immune response via activation of the NF-kappa-B transcription factor. The polypeptide is Cyclic GMP-AMP synthase-like receptor (Magallana gigas (Pacific oyster)).